Reading from the N-terminus, the 277-residue chain is Phosphatidylglycerol--prolipoprotein diacylglyceryl transferase (277 aa).

4 helical membrane-spanning segments follow: residues 22–42, 51–71, 89–109, and 116–136; these read WYGV…LSEA, IIVD…RIYY, IWHG…TAII, and ISFW…QAIG. R137 serves as a coordination point for a 1,2-diacyl-sn-glycero-3-phospho-(1'-sn-glycerol). 3 consecutive transmembrane segments (helical) span residues 177–197, 205–225, and 235–255; these read QPTF…LLII, GELF…IEGM, and FRVS…LIIY.

The protein belongs to the Lgt family.

Its subcellular location is the cell membrane. It catalyses the reaction L-cysteinyl-[prolipoprotein] + a 1,2-diacyl-sn-glycero-3-phospho-(1'-sn-glycerol) = an S-1,2-diacyl-sn-glyceryl-L-cysteinyl-[prolipoprotein] + sn-glycerol 1-phosphate + H(+). It functions in the pathway protein modification; lipoprotein biosynthesis (diacylglyceryl transfer). Its function is as follows. Catalyzes the transfer of the diacylglyceryl group from phosphatidylglycerol to the sulfhydryl group of the N-terminal cysteine of a prolipoprotein, the first step in the formation of mature lipoproteins. This chain is Phosphatidylglycerol--prolipoprotein diacylglyceryl transferase, found in Listeria welshimeri serovar 6b (strain ATCC 35897 / DSM 20650 / CCUG 15529 / CIP 8149 / NCTC 11857 / SLCC 5334 / V8).